We begin with the raw amino-acid sequence, 487 residues long: Glycogen synthase (487 aa).

Residue lysine 20 coordinates ADP-alpha-D-glucose.

It belongs to the glycosyltransferase 1 family. Bacterial/plant glycogen synthase subfamily.

The catalysed reaction is [(1-&gt;4)-alpha-D-glucosyl](n) + ADP-alpha-D-glucose = [(1-&gt;4)-alpha-D-glucosyl](n+1) + ADP + H(+). It functions in the pathway glycan biosynthesis; glycogen biosynthesis. Functionally, synthesizes alpha-1,4-glucan chains using ADP-glucose. The polypeptide is Glycogen synthase (Aliivibrio fischeri (strain MJ11) (Vibrio fischeri)).